A 1418-amino-acid polypeptide reads, in one-letter code: Sterol 3-beta-glucosyltransferase (1418 aa).

Residues 1–16 (MRPFLDDAKRRVDRKL) show a composition bias toward basic and acidic residues. Disordered stretches follow at residues 1-59 (MRPF…SREG), 83-188 (ARFD…RSAT), and 207-233 (LKAS…ASVS). Residues 18–28 (ASRQSLSTSRL) show a composition bias toward polar residues. 2 stretches are compositionally biased toward basic and acidic residues: residues 35-44 (DRLKDNHDAQ) and 95-105 (SEQRPRKESSV). Positions 106 to 115 (RKGTSASANT) are enriched in polar residues. Residues 116–126 (SSPLDSSQRSS) are compositionally biased toward low complexity. Basic and acidic residues-rich tracts occupy residues 127–139 (SRTD…ESGT) and 147–166 (TISD…HEPQ). Positions 209-219 (ASSTERSQPSL) are enriched in polar residues. A GRAM 1 domain is found at 249-288 (EKVLVEYACSLLQSILLQGYMYVTEGHICFYAYLPKKSTV). In terms of domain architecture, PH spans 289–387 (AIKSGYLYKR…WVKALQKVIF (99 aa)). Residues 462–651 (ISSQHLSPQP…DPTKSFSGAP (190 aa)) form a disordered region. Positions 486–497 (RWSLTSGTSRVL) are enriched in polar residues. The span at 508–519 (ASASTSHTSLAH) shows a compositional bias: low complexity. Over residues 534–575 (SESILNSFEQGTESSAAWQSMTDAAESASQILNRSDVFQSPT) the composition is skewed to polar residues. Over residues 578–598 (GLDRRPSGGERRGRRNSDETA) the composition is skewed to basic and acidic residues. A compositionally biased stretch (polar residues) spans 599–612 (RSLSTRANVGTGQQ). Basic and acidic residues predominate over residues 615–633 (ELGRRMDGDTSGREARDST). The segment covering 635-651 (ESDQYTQDPTKSFSGAP) has biased composition (polar residues). In terms of domain architecture, GRAM 2 spans 733 to 799 (DRFRAHFALP…RDIENVEKEK (67 aa)). UDP-alpha-D-glucose-binding residues include serine 920, arginine 921, aspartate 923, alanine 1223, histidine 1225, histidine 1238, glycine 1242, threonine 1243, aspartate 1262, and glutamine 1263. The tract at residues 1339–1418 (SIASSTPFSP…SGPGRKLSGR (80 aa)) is disordered. Over residues 1341 to 1355 (ASSTPFSPTPSAKTT) the composition is skewed to low complexity. Residues 1358–1379 (QDADDDVEDSEEWTFVGDDTDM) are compositionally biased toward acidic residues. Positions 1380–1391 (EMSRRLRDRAIS) are enriched in basic and acidic residues.

It belongs to the glycosyltransferase 28 family.

It localises to the cytoplasm. The protein localises to the preautophagosomal structure membrane. The enzyme catalyses a sterol + UDP-alpha-D-glucose = a sterol 3-beta-D-glucoside + UDP + H(+). It catalyses the reaction ergosterol + UDP-alpha-D-glucose = ergosteryl 3-beta-D-glucoside + UDP + H(+). Sterol glycosyltransferase responsible for the glycosylation of ergosterol to form ergosterol-glucoside. The sequence is that of Sterol 3-beta-glucosyltransferase from Neosartorya fischeri (strain ATCC 1020 / DSM 3700 / CBS 544.65 / FGSC A1164 / JCM 1740 / NRRL 181 / WB 181) (Aspergillus fischerianus).